The sequence spans 676 residues: Methionine--tRNA ligase (676 aa).

The short motif at 15-25 (PYANGPIHLGH) is the 'HIGH' region element. Residues cysteine 146, cysteine 149, cysteine 159, and cysteine 162 each contribute to the Zn(2+) site. Residues 332–336 (KMSKS) carry the 'KMSKS' region motif. An ATP-binding site is contributed by lysine 335. Residues 575–676 (DFAKIDLRIA…EGAQPGMRVK (102 aa)) enclose the tRNA-binding domain.

It belongs to the class-I aminoacyl-tRNA synthetase family. MetG type 1 subfamily. Homodimer. It depends on Zn(2+) as a cofactor.

It localises to the cytoplasm. It carries out the reaction tRNA(Met) + L-methionine + ATP = L-methionyl-tRNA(Met) + AMP + diphosphate. In terms of biological role, is required not only for elongation of protein synthesis but also for the initiation of all mRNA translation through initiator tRNA(fMet) aminoacylation. The protein is Methionine--tRNA ligase of Shewanella sp. (strain MR-4).